The following is a 412-amino-acid chain: NAD-dependent dihydropyrimidine dehydrogenase subunit PreT (412 aa).

Position 286 (E286) interacts with NAD(+).

Belongs to the NADH dehydrogenase family. Heterotetramer of 2 PreA and 2 PreT subunits.

The catalysed reaction is 5,6-dihydrouracil + NAD(+) = uracil + NADH + H(+). It carries out the reaction 5,6-dihydrothymine + NAD(+) = thymine + NADH + H(+). In terms of biological role, involved in pyrimidine base degradation. Catalyzes physiologically the reduction of uracil to 5,6-dihydrouracil (DHU) by using NADH as a specific cosubstrate. It also catalyzes the reverse reaction and the reduction of thymine to 5,6-dihydrothymine (DHT). This is NAD-dependent dihydropyrimidine dehydrogenase subunit PreT (preT) from Escherichia coli O157:H7.